Here is an 876-residue protein sequence, read N- to C-terminus: Alanine--tRNA ligase (876 aa).

At K74 the chain carries N6-acetyllysine. Positions 564, 568, 666, and 670 each coordinate Zn(2+).

The protein belongs to the class-II aminoacyl-tRNA synthetase family. Homotetramer. The cofactor is Zn(2+).

The protein localises to the cytoplasm. The catalysed reaction is tRNA(Ala) + L-alanine + ATP = L-alanyl-tRNA(Ala) + AMP + diphosphate. In terms of biological role, catalyzes the attachment of alanine to tRNA(Ala) in a two-step reaction: alanine is first activated by ATP to form Ala-AMP and then transferred to the acceptor end of tRNA(Ala). Also edits incorrectly charged Ser-tRNA(Ala) and Gly-tRNA(Ala) via its editing domain. The polypeptide is Alanine--tRNA ligase (Shigella sonnei (strain Ss046)).